A 384-amino-acid chain; its full sequence is NAD-capped RNA hydrolase NPY1 (384 aa).

Zn(2+)-binding residues include Cys179, Cys182, Cys197, and Cys206. One can recognise a Nudix hydrolase domain in the interval 219–351; sequence PRTDPTVIIA…AGGYRVPFKN (133 aa). Residues Ala256, Glu272, Glu276, and Glu322 each coordinate Mg(2+). Residues 256-258, Glu272, Glu276, and Glu322 contribute to the substrate site; that span reads AGF. The Nudix box motif lies at 257–278; it reads GFMEPSETIEEACIREIWEETG. The Microbody targeting signal signature appears at 378–380; sequence KTS.

Belongs to the Nudix hydrolase family. NudC subfamily. As to quaternary structure, homodimer. The cofactor is Mg(2+). Requires Zn(2+) as cofactor.

It is found in the peroxisome. The enzyme catalyses a 5'-end NAD(+)-phospho-ribonucleoside in mRNA + H2O = a 5'-end phospho-adenosine-phospho-ribonucleoside in mRNA + beta-nicotinamide D-ribonucleotide + 2 H(+). The catalysed reaction is NAD(+) + H2O = beta-nicotinamide D-ribonucleotide + AMP + 2 H(+). It catalyses the reaction NADH + H2O = reduced beta-nicotinamide D-ribonucleotide + AMP + 2 H(+). MRNA decapping enzyme that specifically removes the nicotinamide adenine dinucleotide (NAD) cap from a subset of mRNAs by hydrolyzing the diphosphate linkage to produce nicotinamide mononucleotide (NMN) and 5' monophosphate mRNA. The NAD-cap is present at the 5'-end of some RNAs; in contrast to the canonical N7 methylguanosine (m7G) cap, the NAD cap promotes mRNA decay. Mediates the hydrolysis of some nucleoside diphosphate derivatives. The chain is NAD-capped RNA hydrolase NPY1 from Saccharomyces cerevisiae (strain ATCC 204508 / S288c) (Baker's yeast).